The following is a 263-amino-acid chain: uncharacterized protein (263 aa).

To B.subtilis soj.

This is an uncharacterized protein from Pseudomonas putida (strain ATCC 47054 / DSM 6125 / CFBP 8728 / NCIMB 11950 / KT2440).